The primary structure comprises 54 residues: Large ribosomal subunit protein bL33B (54 aa).

This sequence belongs to the bacterial ribosomal protein bL33 family.

The polypeptide is Large ribosomal subunit protein bL33B (rpmG2) (Streptomyces coelicolor (strain ATCC BAA-471 / A3(2) / M145)).